Reading from the N-terminus, the 673-residue chain is MAARGGGAGGAGSGSGPSAGTAGEAAEPALRPGEVAALHPQEVAARLQRMRRELSNRRKILVKNLPQDSSSQEVHELLQDYELKYCYVDRNKRTAFVTLLNGEQAQSAIQRFHQFSFRGRELTVQLQPTDALLCITNLPISFTLEEFEELVRAYGNIERCFLVYSEVTGHSKGYGFVEYMKKDFAAKARLELLGRQMGASALFAQWMDVNLLASELIHSKCLCIDKLPSDYSDSEELLQLFSGIHKPVFCQLAQDEGSHGGGFAVVEYSTAEHAEEVQQVADGITIKGSQVQLSFCAPGAPGRSTLAVLIAAQRAMHSNQKGLLPEPNPVQIMKSLNNPAMLQVLLQPQLCGRAMKPVLGVAPSLSHLLSPSLPSAILHFSKAQQSSAVGNTSSLILQNLSPLPLIQQQLMKFDNAHTNNKPGLLGEPPAMVLQPALAIGPPLPLKTDLGHHGEAHKTSNLIPPQTTLAAGLGMLPFFSNQLPAGQAGPGRGTTQEKQSASVSISEASFSGSQHYLQTFPGLPAGGPLTGNQKTPQSQPKGTEVASKNQTSLLGEPPKEIRLSKNPYLNLASVLPSVCLSTAGKGMPPKTGIASNILDAISQGSESQHALEKCIAYSPSIEDYAQASSLRNEKRGSSYLISAPEGGPVELAGQHPQDTGVSYTETYLKKKRVY.

The segment covering M1–P17 has biased composition (gly residues). Residues M1–E34 form a disordered region. Over residues S18–A29 the composition is skewed to low complexity. 3 RRM domains span residues R58–T129, A131–V209, and K220–P298. Residues Q481 to Q549 are disordered. Residues S499 to S512 are compositionally biased toward low complexity. Over residues T529–Q549 the composition is skewed to polar residues.

Interacts with PTBP1 and RAVER1. Expressed throughout embryogenesis. Detected at low levels in adult lung, brain and kidney, but not in the other tissues tested.

The protein localises to the nucleus. The protein resides in the cytoplasm. Functionally, may bind single-stranded nucleic acids. This is Ribonucleoprotein PTB-binding 2 (Raver2) from Mus musculus (Mouse).